The chain runs to 128 residues: Sulfurtransferase TusD (128 aa).

Cys-78 serves as the catalytic Cysteine persulfide intermediate.

This sequence belongs to the DsrE/TusD family. As to quaternary structure, heterohexamer, formed by a dimer of trimers. The hexameric TusBCD complex contains 2 copies each of TusB, TusC and TusD. The TusBCD complex interacts with TusE.

It localises to the cytoplasm. Part of a sulfur-relay system required for 2-thiolation of 5-methylaminomethyl-2-thiouridine (mnm(5)s(2)U) at tRNA wobble positions. Accepts sulfur from TusA and transfers it in turn to TusE. The protein is Sulfurtransferase TusD of Enterobacter sp. (strain 638).